Reading from the N-terminus, the 363-residue chain is Ribosome-binding ATPase YchF (363 aa).

An OBG-type G domain is found at 3–256; the sequence is FKCGIVGLPN…LDDEEKVEFL (254 aa). 12–17 provides a ligand contact to ATP; the sequence is NVGKST. Serine 16 and threonine 36 together coordinate Mg(2+). One can recognise a TGS domain in the interval 278 to 361; the sequence is NLQTYFTAGV…QDGDVMHFRF (84 aa).

The cofactor is Mg(2+).

ATPase that binds to both the 70S ribosome and the 50S ribosomal subunit in a nucleotide-independent manner. Does not hydrolyze GTP. The sequence is that of Ribosome-binding ATPase YchF from Haemophilus influenzae (strain ATCC 51907 / DSM 11121 / KW20 / Rd).